The primary structure comprises 460 residues: Argininosuccinate lyase (460 aa).

Belongs to the lyase 1 family. Argininosuccinate lyase subfamily.

It localises to the cytoplasm. It catalyses the reaction 2-(N(omega)-L-arginino)succinate = fumarate + L-arginine. It participates in amino-acid biosynthesis; L-arginine biosynthesis; L-arginine from L-ornithine and carbamoyl phosphate: step 3/3. This chain is Argininosuccinate lyase, found in Oleidesulfovibrio alaskensis (strain ATCC BAA-1058 / DSM 17464 / G20) (Desulfovibrio alaskensis).